Consider the following 213-residue polypeptide: Skin granule protein (213 aa).

The signal sequence occupies residues Met1 to Gly26. 3 repeat units span residues Leu27–Gly48, Leu49–Gly70, and Leu71–Gly92. Positions Leu27 to Gln104 are 4 X 22 AA approximate tandem repeats. A 4; truncated repeat occupies Leu93–Gln104. Residues Trp162–Lys213 form a disordered region. Positions Arg166–Lys213 are enriched in basic residues.

The protein resides in the secreted. In Xenopus laevis (African clawed frog), this protein is Skin granule protein (sgp).